Consider the following 331-residue polypeptide: GTPase Obg (331 aa).

One can recognise an Obg domain in the interval 1–159; it reads MQFIDQARIA…RELQLELKLL (159 aa). The region spanning 160-328 is the OBG-type G domain; the sequence is AEVGLVGLPN…LLQQVWQELG (169 aa). GTP contacts are provided by residues 166–173, 191–195, 213–216, 280–283, and 309–311; these read GLPNAGKS, FTTLV, DIPG, SKSE, and SAV. Mg(2+)-binding residues include Ser-173 and Thr-193.

It belongs to the TRAFAC class OBG-HflX-like GTPase superfamily. OBG GTPase family. Monomer. Mg(2+) serves as cofactor.

Its subcellular location is the cytoplasm. Its function is as follows. An essential GTPase which binds GTP, GDP and possibly (p)ppGpp with moderate affinity, with high nucleotide exchange rates and a fairly low GTP hydrolysis rate. Plays a role in control of the cell cycle, stress response, ribosome biogenesis and in those bacteria that undergo differentiation, in morphogenesis control. The sequence is that of GTPase Obg from Synechococcus sp. (strain RCC307).